A 219-amino-acid polypeptide reads, in one-letter code: 7-cyano-7-deazaguanine synthase (219 aa).

10–20 (FSGGQDSTTCL) is a binding site for ATP. Zn(2+) is bound by residues Cys188, Cys196, Cys199, and Cys202.

Belongs to the QueC family. Requires Zn(2+) as cofactor.

It carries out the reaction 7-carboxy-7-deazaguanine + NH4(+) + ATP = 7-cyano-7-deazaguanine + ADP + phosphate + H2O + H(+). The protein operates within purine metabolism; 7-cyano-7-deazaguanine biosynthesis. Catalyzes the ATP-dependent conversion of 7-carboxy-7-deazaguanine (CDG) to 7-cyano-7-deazaguanine (preQ(0)). This is 7-cyano-7-deazaguanine synthase from Neisseria gonorrhoeae (strain NCCP11945).